Consider the following 191-residue polypeptide: Peptidyl-tRNA hydrolase (191 aa).

Residue Tyr-16 coordinates tRNA. His-21 (proton acceptor) is an active-site residue. Tyr-67, Asn-69, and Asn-115 together coordinate tRNA.

This sequence belongs to the PTH family. In terms of assembly, monomer.

It localises to the cytoplasm. It catalyses the reaction an N-acyl-L-alpha-aminoacyl-tRNA + H2O = an N-acyl-L-amino acid + a tRNA + H(+). Functionally, hydrolyzes ribosome-free peptidyl-tRNAs (with 1 or more amino acids incorporated), which drop off the ribosome during protein synthesis, or as a result of ribosome stalling. Its function is as follows. Catalyzes the release of premature peptidyl moieties from peptidyl-tRNA molecules trapped in stalled 50S ribosomal subunits, and thus maintains levels of free tRNAs and 50S ribosomes. The polypeptide is Peptidyl-tRNA hydrolase (Wigglesworthia glossinidia brevipalpis).